The primary structure comprises 260 residues: Uroplakin-1b (260 aa).

Residues 2–15 (AKDDSTVRCFQGLL) lie on the Cytoplasmic side of the membrane. A helical membrane pass occupies residues 16-36 (IFGNVIIGMCSIALMAECIFF). The Extracellular segment spans residues 37-60 (VSDQNSLYPLLEATNNDDIYAAAW). Residues 61–81 (IGMFVGICLFCLSVLGIVGIM) form a helical membrane-spanning segment. The Cytoplasmic portion of the chain corresponds to 82–86 (KSNRK). A helical transmembrane segment spans residues 87–107 (ILLVYFILMFIVYAFEVASCI). The Extracellular segment spans residues 108–229 (TAATQRDFFT…ELISGPMNRH (122 aa)). The helical transmembrane segment at 230 to 250 (AWGVAWFGFAILCWTFWVLLG) threads the bilayer. Residues 251–260 (TMFYWSRIDY) lie on the Cytoplasmic side of the membrane.

It belongs to the tetraspanin (TM4SF) family. Heterodimer with uroplakin-3A (UPK3A) or uroplakin-3B (UPK3B). N-glycosylated with high-mannose oligosaccharides. Bladder epithelium.

The protein resides in the membrane. Component of the asymmetric unit membrane (AUM); a highly specialized biomembrane elaborated by terminally differentiated urothelial cells. May play an important role in normal bladder epithelial physiology, possibly in regulating membrane permeability of superficial umbrella cells or in stabilizing the apical membrane through AUM/cytoskeletal interactions. The polypeptide is Uroplakin-1b (UPK1B) (Bos taurus (Bovine)).